Consider the following 185-residue polypeptide: dCTP deaminase (185 aa).

DCTP contacts are provided by residues 108 to 113, 132 to 134, Gln153, Tyr167, and Gln177; these read KSTYAR and TLE. Glu134 acts as the Proton donor/acceptor in catalysis.

The protein belongs to the dCTP deaminase family. Homotrimer.

It carries out the reaction dCTP + H2O + H(+) = dUTP + NH4(+). It participates in pyrimidine metabolism; dUMP biosynthesis; dUMP from dCTP (dUTP route): step 1/2. In terms of biological role, catalyzes the deamination of dCTP to dUTP. The chain is dCTP deaminase from Pelagibacter ubique (strain HTCC1062).